A 219-amino-acid polypeptide reads, in one-letter code: ATP phosphoribosyltransferase (219 aa).

This sequence belongs to the ATP phosphoribosyltransferase family. Short subfamily. As to quaternary structure, heteromultimer composed of HisG and HisZ subunits.

It localises to the cytoplasm. It carries out the reaction 1-(5-phospho-beta-D-ribosyl)-ATP + diphosphate = 5-phospho-alpha-D-ribose 1-diphosphate + ATP. It functions in the pathway amino-acid biosynthesis; L-histidine biosynthesis; L-histidine from 5-phospho-alpha-D-ribose 1-diphosphate: step 1/9. In terms of biological role, catalyzes the condensation of ATP and 5-phosphoribose 1-diphosphate to form N'-(5'-phosphoribosyl)-ATP (PR-ATP). Has a crucial role in the pathway because the rate of histidine biosynthesis seems to be controlled primarily by regulation of HisG enzymatic activity. In Clostridium kluyveri (strain NBRC 12016), this protein is ATP phosphoribosyltransferase.